The chain runs to 324 residues: THUMP domain-containing protein 1 homolog (324 aa).

Disordered regions lie at residues 1–24 (MEPA…KKYF) and 67–104 (SEKP…DDDD). The span at 68–80 (EKPENEPEKKQPE) shows a compositional bias: basic and acidic residues. Phosphothreonine is present on threonine 99. Serine 100 is modified (phosphoserine). In terms of domain architecture, THUMP spans 154 to 260 (DIATTGKSMS…RGWCLLSVID (107 aa)). The segment at 275–324 (NPSDKKSSGEGDSKSETSEVANGNDKEQAESSEESKSNDDENKDSTENDK) is disordered. Basic and acidic residues-rich tracts occupy residues 277 to 291 (SDKK…KSET) and 298 to 324 (NDKE…ENDK).

It belongs to the THUMPD1 family.

In Drosophila melanogaster (Fruit fly), this protein is THUMP domain-containing protein 1 homolog.